Here is a 505-residue protein sequence, read N- to C-terminus: Lysine--tRNA ligase (505 aa).

Positions 1 to 11 (MSDQQLDQPSL) are enriched in polar residues. A disordered region spans residues 1–23 (MSDQQLDQPSLSHEERQHEENKL). Over residues 12 to 23 (SHEERQHEENKL) the composition is skewed to basic and acidic residues. Residues E415 and E422 each coordinate Mg(2+).

This sequence belongs to the class-II aminoacyl-tRNA synthetase family. As to quaternary structure, homodimer. The cofactor is Mg(2+).

It localises to the cytoplasm. The enzyme catalyses tRNA(Lys) + L-lysine + ATP = L-lysyl-tRNA(Lys) + AMP + diphosphate. The protein is Lysine--tRNA ligase of Ectopseudomonas mendocina (strain ymp) (Pseudomonas mendocina).